A 709-amino-acid chain; its full sequence is Kelch domain-containing protein STK_09390 (709 aa).

The first 22 residues, 1 to 22, serve as a signal peptide directing secretion; the sequence is MKRNTLLALVLVILIFPTLSTA. 6 Kelch repeats span residues 49–94, 96–140, 141–192, 193–240, 242–288, and 290–340; these read KIFL…VCNN, LYVV…SYDY, KIYV…FNGS, ALFV…YYNG, MYLV…VQIG, and KLII…DTNA. Fibronectin type-III domains follow at residues 315–405, 406–488, 489–566, and 568–643; these read PPPK…VPNP, PIIK…ASKA, NLTV…IYYI, and PASP…NDVR.

The polypeptide is Kelch domain-containing protein STK_09390 (Sulfurisphaera tokodaii (strain DSM 16993 / JCM 10545 / NBRC 100140 / 7) (Sulfolobus tokodaii)).